The following is a 140-amino-acid chain: Putative pre-16S rRNA nuclease (140 aa).

Belongs to the YqgF nuclease family.

The protein resides in the cytoplasm. Functionally, could be a nuclease involved in processing of the 5'-end of pre-16S rRNA. The polypeptide is Putative pre-16S rRNA nuclease (Yersinia pseudotuberculosis serotype IB (strain PB1/+)).